Here is a 400-residue protein sequence, read N- to C-terminus: Probable S-adenosylmethionine synthase (400 aa).

Residue 135-140 coordinates ATP; that stretch reads KPGSKD.

It belongs to the AdoMet synthase 2 family. It depends on Mg(2+) as a cofactor.

It catalyses the reaction L-methionine + ATP + H2O = S-adenosyl-L-methionine + phosphate + diphosphate. It participates in amino-acid biosynthesis; S-adenosyl-L-methionine biosynthesis; S-adenosyl-L-methionine from L-methionine: step 1/1. Its function is as follows. Catalyzes the formation of S-adenosylmethionine from methionine and ATP. This chain is Probable S-adenosylmethionine synthase (mat), found in Aquifex aeolicus (strain VF5).